The sequence spans 1420 residues: DNA-directed RNA polymerase subunit beta' (1420 aa).

Zn(2+) contacts are provided by Cys-71, Cys-73, Cys-86, and Cys-89. 3 residues coordinate Mg(2+): Asp-461, Asp-463, and Asp-465. 4 residues coordinate Zn(2+): Cys-815, Cys-889, Cys-896, and Cys-899.

Belongs to the RNA polymerase beta' chain family. In terms of assembly, the RNAP catalytic core consists of 2 alpha, 1 beta, 1 beta' and 1 omega subunit. When a sigma factor is associated with the core the holoenzyme is formed, which can initiate transcription. It depends on Mg(2+) as a cofactor. Zn(2+) serves as cofactor.

The enzyme catalyses RNA(n) + a ribonucleoside 5'-triphosphate = RNA(n+1) + diphosphate. In terms of biological role, DNA-dependent RNA polymerase catalyzes the transcription of DNA into RNA using the four ribonucleoside triphosphates as substrates. This is DNA-directed RNA polymerase subunit beta' from Histophilus somni (strain 129Pt) (Haemophilus somnus).